We begin with the raw amino-acid sequence, 159 residues long: U1 small nuclear ribonucleoprotein C (159 aa).

The Matrin-type zinc-finger motif lies at 4–36; sequence FYCDYCDTYLTHDSPSVRKTHCSGRKHKENVKD. The residue at position 8 (Y8) is a Phosphotyrosine. Phosphoserine is present on S17. Residue K52 is modified to N6-acetyllysine. Disordered stretches follow at residues 62–96 and 140–159; these read IPPT…PAPH and RPPA…RPDR. The segment covering 63–92 has biased composition (pro residues); it reads PPTPFSAPPPAGAMIPPPPSLPGPPRPGMM.

The protein belongs to the U1 small nuclear ribonucleoprotein C family. As to quaternary structure, component of the U1 snRNP. The U1 snRNP is composed of the U1 snRNA and the 7 core Sm proteins SNRPB, SNRPD1, SNRPD2, SNRPD3, SNRPE, SNRPF and SNRPG that assemble in a heptameric protein ring on the Sm site of the small nuclear RNA to form the core snRNP, and at least 3 U1 snRNP-specific proteins SNRNP70/U1-70K, SNRPA/U1-A and SNRPC/U1-C. SNRPC/U1-C interacts with U1 snRNA and the 5' splice-site region of the pre-mRNA. Interacts (via N-terminus) with TIA1 (via C-terminus); thereby promoting spliceosomal U1 snRNP recruitment to 5' splice sites.

The protein resides in the nucleus. Its function is as follows. Component of the spliceosomal U1 snRNP, which is essential for recognition of the pre-mRNA 5' splice-site and the subsequent assembly of the spliceosome. SNRPC/U1-C is directly involved in initial 5' splice-site recognition for both constitutive and regulated alternative splicing. The interaction with the 5' splice-site seems to precede base-pairing between the pre-mRNA and the U1 snRNA. Stimulates commitment or early (E) complex formation by stabilizing the base pairing of the 5' end of the U1 snRNA and the 5' splice-site region. The sequence is that of U1 small nuclear ribonucleoprotein C from Homo sapiens (Human).